The primary structure comprises 426 residues: Serine hydroxymethyltransferase (426 aa).

(6S)-5,6,7,8-tetrahydrofolate contacts are provided by residues leucine 113 and 117-119 (GHL). Lysine 222 is subject to N6-(pyridoxal phosphate)lysine. Residue 363–365 (SAF) participates in (6S)-5,6,7,8-tetrahydrofolate binding.

The protein belongs to the SHMT family. In terms of assembly, homodimer. It depends on pyridoxal 5'-phosphate as a cofactor.

It localises to the cytoplasm. The catalysed reaction is (6R)-5,10-methylene-5,6,7,8-tetrahydrofolate + glycine + H2O = (6S)-5,6,7,8-tetrahydrofolate + L-serine. The protein operates within one-carbon metabolism; tetrahydrofolate interconversion. It functions in the pathway amino-acid biosynthesis; glycine biosynthesis; glycine from L-serine: step 1/1. Functionally, catalyzes the reversible interconversion of serine and glycine with tetrahydrofolate (THF) serving as the one-carbon carrier. This reaction serves as the major source of one-carbon groups required for the biosynthesis of purines, thymidylate, methionine, and other important biomolecules. Also exhibits THF-independent aldolase activity toward beta-hydroxyamino acids, producing glycine and aldehydes, via a retro-aldol mechanism. The protein is Serine hydroxymethyltransferase of Phocaeicola vulgatus (strain ATCC 8482 / DSM 1447 / JCM 5826 / CCUG 4940 / NBRC 14291 / NCTC 11154) (Bacteroides vulgatus).